The following is a 400-amino-acid chain: Phosphoglycerate kinase (400 aa).

Residues D21–N23, R37, H60–R63, R119, and R152 each bind substrate. ATP contacts are provided by residues K205, G296, E327, and G353–T356.

This sequence belongs to the phosphoglycerate kinase family. As to quaternary structure, monomer.

It localises to the cytoplasm. It carries out the reaction (2R)-3-phosphoglycerate + ATP = (2R)-3-phospho-glyceroyl phosphate + ADP. It participates in carbohydrate degradation; glycolysis; pyruvate from D-glyceraldehyde 3-phosphate: step 2/5. The sequence is that of Phosphoglycerate kinase from Aliarcobacter butzleri (strain RM4018) (Arcobacter butzleri).